The chain runs to 100 residues: uncharacterized protein (100 aa).

It is found in the secreted. This is an uncharacterized protein from Mycobacterium leprae (strain TN).